Here is a 385-residue protein sequence, read N- to C-terminus: Glucans biosynthesis protein C (385 aa).

Transmembrane regions (helical) follow at residues 17-39 (AWLM…TWHV), 54-76 (FIHS…MLFL), 88-110 (VERV…FIML), 136-158 (LISH…WIFK), 179-198 (LSVI…RTIF), 213-235 (IVMQ…IFPH), 242-261 (TPSR…YLLN), 276-295 (SVIT…SFGH), 308-330 (FVNA…GAYI), and 334-356 (ITSN…IILY).

The protein belongs to the acyltransferase 3 family. OpgC subfamily.

Its subcellular location is the cell membrane. The protein operates within glycan metabolism; osmoregulated periplasmic glucan (OPG) biosynthesis. Necessary for the succinyl substitution of periplasmic glucans. Could catalyze the transfer of succinyl residues from the cytoplasmic side of the membrane to the nascent glucan backbones on the periplasmic side of the membrane. In Escherichia coli O157:H7, this protein is Glucans biosynthesis protein C.